The chain runs to 393 residues: Translation initiation factor eIF2B subunit beta (393 aa).

Residues 105–125 form a disordered region; it reads VSSSNSSSPSQKRDIPSNEKL. Phosphoserine is present on residues Ser106, Ser108, and Ser112.

Belongs to the eIF-2B alpha/beta/delta subunits family. Component of the translation initiation factor 2B (eIF2B) complex which is a heterodecamer of two sets of five different subunits: alpha, beta, gamma, delta and epsilon. Subunits alpha, beta and delta comprise a regulatory subcomplex and subunits epsilon and gamma comprise a catalytic subcomplex. Within the complex, the hexameric regulatory complex resides at the center, with the two heterodimeric catalytic subcomplexes bound on opposite sides.

Its subcellular location is the cytoplasm. It localises to the cytosol. Its function is as follows. Acts as a component of the translation initiation factor 2B (eIF2B) complex, which catalyzes the exchange of GDP for GTP on the eukaryotic initiation factor 2 (eIF2) complex gamma subunit. Its guanine nucleotide exchange factor activity is repressed when bound to eIF2 complex phosphorylated on the alpha subunit, thereby limiting the amount of methionyl-initiator methionine tRNA available to the ribosome and consequently global translation is repressed. The polypeptide is Translation initiation factor eIF2B subunit beta (tif222) (Schizosaccharomyces pombe (strain 972 / ATCC 24843) (Fission yeast)).